The primary structure comprises 142 residues: Neuritin (142 aa).

The N-terminal stretch at 1–27 (MGLKLNGRYISLILAVQIAYLVQAVRA) is a signal peptide. The GPI-anchor amidated glycine moiety is linked to residue glycine 116. Positions 117–142 (AAGSLLPAFPVLLVSLSAALATWLSF) are cleaved as a propeptide — removed in mature form.

The protein belongs to the neuritin family. Component of the outer core of AMPAR complex. AMPAR complex consists of an inner core made of 4 pore-forming GluA/GRIA proteins (GRIA1, GRIA2, GRIA3 and GRIA4) and 4 major auxiliary subunits arranged in a twofold symmetry. One of the two pairs of distinct binding sites is occupied either by CNIH2, CNIH3 or CACNG2, CACNG3. The other harbors CACNG2, CACNG3, CACNG4, CACNG8 or GSG1L. This inner core of AMPAR complex is complemented by outer core constituents binding directly to the GluA/GRIA proteins at sites distinct from the interaction sites of the inner core constituents. Outer core constituents include at least PRRT1, PRRT2, CKAMP44/SHISA9, FRRS1L and NRN1. The proteins of the inner and outer core serve as a platform for other, more peripherally associated AMPAR constituents. Alone or in combination, these auxiliary subunits control the gating and pharmacology of the AMPAR complex and profoundly impact their biogenesis and protein processing.

It localises to the cell membrane. It is found in the synapse. Its function is as follows. Promotes neurite outgrowth and especially branching of neuritic processes in primary hippocampal and cortical cells. The polypeptide is Neuritin (NRN1) (Homo sapiens (Human)).